The primary structure comprises 293 residues: MANVTAALVKELRERTAAGMMDCKKALEEAAGDIELAIENMRKSGQAKAAKKAGRIAAEGVIFARTEGNVAVMIELNSETDFVAKDASFMAMGQKIADIAATQKIADVDALKAADFGNGESVELTITNLIAKIGENMNLRRVMLVEGDNLGTYVHGSRIGVITKLTGGTAELAKDLAMHVAANSPQFVKPEDVSAEVVAKEREIQIDIAINSGKPKDIAEKMVEGRMKKFTGEVSLTGQPFVKDPSMTVAELLKKEGADVVSFTRFEVGEGIEKQETDFAAEVAAQIAAAQKA.

The tract at residues 80 to 83 (TDFV) is involved in Mg(2+) ion dislocation from EF-Tu.

Belongs to the EF-Ts family.

It localises to the cytoplasm. In terms of biological role, associates with the EF-Tu.GDP complex and induces the exchange of GDP to GTP. It remains bound to the aminoacyl-tRNA.EF-Tu.GTP complex up to the GTP hydrolysis stage on the ribosome. In Aeromonas salmonicida (strain A449), this protein is Elongation factor Ts.